The following is a 256-amino-acid chain: Leucyl/phenylalanyl-tRNA--protein transferase (256 aa).

Belongs to the L/F-transferase family.

It is found in the cytoplasm. The enzyme catalyses N-terminal L-lysyl-[protein] + L-leucyl-tRNA(Leu) = N-terminal L-leucyl-L-lysyl-[protein] + tRNA(Leu) + H(+). The catalysed reaction is N-terminal L-arginyl-[protein] + L-leucyl-tRNA(Leu) = N-terminal L-leucyl-L-arginyl-[protein] + tRNA(Leu) + H(+). It catalyses the reaction L-phenylalanyl-tRNA(Phe) + an N-terminal L-alpha-aminoacyl-[protein] = an N-terminal L-phenylalanyl-L-alpha-aminoacyl-[protein] + tRNA(Phe). Functionally, functions in the N-end rule pathway of protein degradation where it conjugates Leu, Phe and, less efficiently, Met from aminoacyl-tRNAs to the N-termini of proteins containing an N-terminal arginine or lysine. The polypeptide is Leucyl/phenylalanyl-tRNA--protein transferase (Hydrogenovibrio crunogenus (strain DSM 25203 / XCL-2) (Thiomicrospira crunogena)).